The following is a 417-amino-acid chain: Solanesyl diphosphate synthase 2, chloroplastic (417 aa).

The transit peptide at 1-60 (MMMSCRNIDLGTSVLDHSCSSSSTSRRFLFGNSSKTVCMIGGRSCVGNLVFLRRDLATCR) directs the protein to the chloroplast. Isopentenyl diphosphate contacts are provided by Lys137, Arg140, and His175. 2 residues coordinate Mg(2+): Asp182 and Asp186. Position 191 (Arg191) interacts with an all-trans-polyprenyl diphosphate. Arg192 lines the isopentenyl diphosphate pocket. An all-trans-polyprenyl diphosphate contacts are provided by Lys268, Thr269, Gln306, and Lys323.

It belongs to the FPP/GGPP synthase family. As to quaternary structure, homodimer. Interacts with FBN5. It depends on Mg(2+) as a cofactor. Higher expression in leaves than in roots.

The protein resides in the plastid. It is found in the chloroplast. The catalysed reaction is 5 isopentenyl diphosphate + (2E,6E,10E)-geranylgeranyl diphosphate = all-trans-nonaprenyl diphosphate + 5 diphosphate. Its function is as follows. Involved in providing solanesyl diphosphate for plastoquinone-9 (PQ-9) formation in plastids. Catalyzes the elongation of the prenyl side chain of PQ-9 in plastids. Contributes to the biosynthesis of plastochromanol-8 (PC-8) in plastids. Does not contribute to the synthesis of tocopherol or ubiquinone. PQ-9 and PC-8 are lipophilic antioxidants that act as protectant against photooxidative stress under high light stress conditions. Prefers geranylgeranyl diphosphate to farnesyl diphosphate as substrate. No activity with geranyl diphosphate or dimethylallyl diphosphate as substrate. The protein is Solanesyl diphosphate synthase 2, chloroplastic of Arabidopsis thaliana (Mouse-ear cress).